We begin with the raw amino-acid sequence, 227 residues long: 2,3-bisphosphoglycerate-dependent phosphoglycerate mutase (227 aa).

Substrate is bound by residues 7–14 (RHGQSEWN), 20–21 (TG), Arg59, 86–89 (ERHY), Lys97, 113–114 (RR), and 182–183 (GN). The Tele-phosphohistidine intermediate role is filled by His8. Glu86 (proton donor/acceptor) is an active-site residue.

The protein belongs to the phosphoglycerate mutase family. BPG-dependent PGAM subfamily. As to quaternary structure, homodimer.

It carries out the reaction (2R)-2-phosphoglycerate = (2R)-3-phosphoglycerate. It functions in the pathway carbohydrate degradation; glycolysis; pyruvate from D-glyceraldehyde 3-phosphate: step 3/5. In terms of biological role, catalyzes the interconversion of 2-phosphoglycerate and 3-phosphoglycerate. This is 2,3-bisphosphoglycerate-dependent phosphoglycerate mutase from Neisseria meningitidis serogroup B (strain ATCC BAA-335 / MC58).